A 358-amino-acid chain; its full sequence is Very long chain fatty acid elongase AAEL008004 (358 aa).

The next 7 membrane-spanning stretches (helical) occupy residues 26–46 (WPLMSSPFPTLALCLGYVYLV), 66–86 (LILYNFVQVVFSAWLFYEIGI), 115–135 (ACWWYYFSKFTEFFDTFFFVM), 147–167 (VIHHGCMPMSVWFGVKFTPGG), 171–191 (FFGLLNTFVHIVMYTYYLFTA), 207–227 (TSLQMVQFVAIMVHAFQLLFI), and 234–254 (AFVWWIGMHAVMFLFLFNEFY). Residues 285–295 (SAVSSNGSAIT) show a composition bias toward polar residues. The interval 285–322 (SAVSSNGSAITANGHHGKNGSVHHHSNGSATSNGTSLL) is disordered. A compositionally biased stretch (basic residues) spans 299–310 (HHGKNGSVHHHS). Residues 311 to 322 (NGSATSNGTSLL) are compositionally biased toward polar residues.

It belongs to the ELO family.

Its subcellular location is the membrane. The enzyme catalyses a very-long-chain acyl-CoA + malonyl-CoA + H(+) = a very-long-chain 3-oxoacyl-CoA + CO2 + CoA. Its function is as follows. Could be implicated in synthesis of very long chain fatty acids. The protein is Very long chain fatty acid elongase AAEL008004 of Aedes aegypti (Yellowfever mosquito).